The chain runs to 437 residues: Amino-acid acetyltransferase (437 aa).

An N-acetyltransferase domain is found at 289-437 (ECIRLATSFD…SKVLMLALDN (149 aa)).

This sequence belongs to the acetyltransferase family. ArgA subfamily.

It localises to the cytoplasm. The enzyme catalyses L-glutamate + acetyl-CoA = N-acetyl-L-glutamate + CoA + H(+). It functions in the pathway amino-acid biosynthesis; L-arginine biosynthesis; N(2)-acetyl-L-ornithine from L-glutamate: step 1/4. The polypeptide is Amino-acid acetyltransferase (Haemophilus ducreyi (strain 35000HP / ATCC 700724)).